The sequence spans 113 residues: Large ribosomal subunit protein bL19 (113 aa).

This sequence belongs to the bacterial ribosomal protein bL19 family.

In terms of biological role, this protein is located at the 30S-50S ribosomal subunit interface and may play a role in the structure and function of the aminoacyl-tRNA binding site. The sequence is that of Large ribosomal subunit protein bL19 from Mycobacterium sp. (strain JLS).